The following is a 341-amino-acid chain: Inactive caspase-12 (341 aa).

One can recognise a CARD domain in the interval 1–92 (MADEKPSNGV…QLSSDISSDG (92 aa)). A phosphoserine mark is found at Ser-85 and Ser-90. Catalysis depends on residues His-172 and Cys-220.

The protein belongs to the peptidase C14A family. In terms of tissue distribution, widely expressed, with highest levels in lung.

May function as a negative regulator of inflammatory responses and innate immunity. May reduce cytokine release in response to bacterial lipopolysaccharide during infection. Reduces activation of NF-kappa-B in response to TNF. May lack protease activity. The polypeptide is Inactive caspase-12 (CASP12) (Homo sapiens (Human)).